An 85-amino-acid polypeptide reads, in one-letter code: Small ribosomal subunit protein bS16 (85 aa).

This sequence belongs to the bacterial ribosomal protein bS16 family.

The protein is Small ribosomal subunit protein bS16 of Rubrobacter xylanophilus (strain DSM 9941 / JCM 11954 / NBRC 16129 / PRD-1).